Here is a 380-residue protein sequence, read N- to C-terminus: Cytochrome b (380 aa).

4 consecutive transmembrane segments (helical) span residues 33–53, 77–98, 113–133, and 178–198; these read FGSL…FLAM, WLIR…FLHV, WNMG…GYVL, and FFAF…VHLL. Heme contacts are provided by histidine 83 and histidine 97. Residues histidine 182 and histidine 196 each coordinate heme. Histidine 201 contributes to the a ubiquinone binding site. A run of 4 helical transmembrane segments spans residues 226–246, 288–308, 320–340, and 347–367; these read VKDF…TLFF, LGGV…PLLH, ITQT…WIGG, and FIII…IFMP.

The protein belongs to the cytochrome b family. In terms of assembly, the cytochrome bc1 complex contains 11 subunits: 3 respiratory subunits (MT-CYB, CYC1 and UQCRFS1), 2 core proteins (UQCRC1 and UQCRC2) and 6 low-molecular weight proteins (UQCRH/QCR6, UQCRB/QCR7, UQCRQ/QCR8, UQCR10/QCR9, UQCR11/QCR10 and a cleavage product of UQCRFS1). This cytochrome bc1 complex then forms a dimer. Requires heme as cofactor.

Its subcellular location is the mitochondrion inner membrane. In terms of biological role, component of the ubiquinol-cytochrome c reductase complex (complex III or cytochrome b-c1 complex) that is part of the mitochondrial respiratory chain. The b-c1 complex mediates electron transfer from ubiquinol to cytochrome c. Contributes to the generation of a proton gradient across the mitochondrial membrane that is then used for ATP synthesis. This is Cytochrome b (MT-CYB) from Microtus arvalis (Common vole).